A 362-amino-acid chain; its full sequence is UDP-N-acetylglucosamine--N-acetylmuramyl-(pentapeptide) pyrophosphoryl-undecaprenol N-acetylglucosamine transferase (362 aa).

UDP-N-acetyl-alpha-D-glucosamine contacts are provided by residues 10 to 12 (TAG), Asn-124, Arg-161, Ser-195, and Gln-291.

This sequence belongs to the glycosyltransferase 28 family. MurG subfamily.

It localises to the cell membrane. It catalyses the reaction di-trans,octa-cis-undecaprenyl diphospho-N-acetyl-alpha-D-muramoyl-L-alanyl-D-glutamyl-meso-2,6-diaminopimeloyl-D-alanyl-D-alanine + UDP-N-acetyl-alpha-D-glucosamine = di-trans,octa-cis-undecaprenyl diphospho-[N-acetyl-alpha-D-glucosaminyl-(1-&gt;4)]-N-acetyl-alpha-D-muramoyl-L-alanyl-D-glutamyl-meso-2,6-diaminopimeloyl-D-alanyl-D-alanine + UDP + H(+). The protein operates within cell wall biogenesis; peptidoglycan biosynthesis. Its function is as follows. Cell wall formation. Catalyzes the transfer of a GlcNAc subunit on undecaprenyl-pyrophosphoryl-MurNAc-pentapeptide (lipid intermediate I) to form undecaprenyl-pyrophosphoryl-MurNAc-(pentapeptide)GlcNAc (lipid intermediate II). The polypeptide is UDP-N-acetylglucosamine--N-acetylmuramyl-(pentapeptide) pyrophosphoryl-undecaprenol N-acetylglucosamine transferase (Streptomyces collinus).